Here is a 161-residue protein sequence, read N- to C-terminus: MTLSIIVAHDKQRVIGYQNQLPWHLPNDLKHIKQLTTGNTLVMARKTFNSIGKPLPNRRNVVLTNQASFHHEGVDVINSLDEIKELSGHVFIFGGQTLYEAMIDQVDDMYITVIDGKFQGDTFFPPYTFENWEVESSVEGQLDEKNTIPHTFLHLVRRKGK.

The DHFR domain occupies 2–157; it reads TLSIIVAHDK…IPHTFLHLVR (156 aa). 6 to 8 contributes to the substrate binding site; the sequence is IVA. NADP(+) contacts are provided by residues 7–8 and 15–20; these read VA and IGYQNQ. Residue D28 participates in substrate binding. 44–47 serves as a coordination point for NADP(+); sequence ARKT. R58 provides a ligand contact to substrate. NADP(+)-binding positions include 63 to 66 and 93 to 98; these read LTNQ and FGGQTL. T112 contributes to the substrate binding site.

The protein belongs to the dihydrofolate reductase family.

It catalyses the reaction (6S)-5,6,7,8-tetrahydrofolate + NADP(+) = 7,8-dihydrofolate + NADPH + H(+). The protein operates within cofactor biosynthesis; tetrahydrofolate biosynthesis; 5,6,7,8-tetrahydrofolate from 7,8-dihydrofolate: step 1/1. Its function is as follows. Key enzyme in folate metabolism. Catalyzes an essential reaction for de novo glycine and purine synthesis, and for DNA precursor synthesis. In Staphylococcus aureus, this protein is Dihydrofolate reductase type 1 from Tn4003 (dfrA).